The chain runs to 312 residues: Ribonuclease Z (312 aa).

The Zn(2+) site is built by H63, H65, D67, H68, H140, D211, and H269. D67 acts as the Proton acceptor in catalysis.

The protein belongs to the RNase Z family. In terms of assembly, homodimer. Requires Zn(2+) as cofactor.

The enzyme catalyses Endonucleolytic cleavage of RNA, removing extra 3' nucleotides from tRNA precursor, generating 3' termini of tRNAs. A 3'-hydroxy group is left at the tRNA terminus and a 5'-phosphoryl group is left at the trailer molecule.. In terms of biological role, zinc phosphodiesterase, which displays some tRNA 3'-processing endonuclease activity. Probably involved in tRNA maturation, by removing a 3'-trailer from precursor tRNA. The sequence is that of Ribonuclease Z from Anoxybacillus flavithermus (strain DSM 21510 / WK1).